A 1076-amino-acid chain; its full sequence is ESX secretion system protein YueB (1076 aa).

A helical membrane pass occupies residues 9–29 (IKLISAVIIILLLPVLFFRFI). Disordered regions lie at residues 372-404 (RLSL…DIED) and 423-552 (IKDI…ETDI). Basic and acidic residues predominate over residues 423–439 (IKDISEGLKEPEQEKPT). Composition is skewed to polar residues over residues 449–495 (DDSP…NIET) and 503–522 (SKNV…SKTD). Residues 552-622 (ISGAKKRLNE…TKKLVDFDNN (71 aa)) adopt a coiled-coil conformation. Transmembrane regions (helical) follow at residues 904–924 (TVPP…IGYF), 938–958 (ALFG…GLNI), 964–984 (DQTI…SAFI), 995–1015 (GWVA…DLIM), and 1040–1060 (TMGI…PLII).

The protein belongs to the EsaA family.

The protein localises to the cell membrane. Its function is as follows. Required for YukE secretion. Probable component or regulator of the ESX/ESAT-6-like secretion system (BsEss). Bacteriophage SPP1 receptor. Essential for the irreversible adsorption of the bacteriophage. The chain is ESX secretion system protein YueB (yueB) from Bacillus subtilis (strain 168).